The sequence spans 224 residues: Small ribosomal subunit protein eS1 (224 aa).

The protein belongs to the eukaryotic ribosomal protein eS1 family.

This Methanococcus maripaludis (strain C7 / ATCC BAA-1331) protein is Small ribosomal subunit protein eS1.